The primary structure comprises 397 residues: Riboflavin biosynthesis protein RibBA (397 aa).

The DHBP synthase stretch occupies residues 1–199 (MFHRIEEALE…IEDLIAYRRH (199 aa)). D-ribulose 5-phosphate is bound by residues 26–27 (RE), Asp-31, 138–142 (RAGHT), and Glu-162. Glu-27 contacts Mg(2+). His-141 contacts Mg(2+). The tract at residues 200–397 (HETLVTREVE…VNKLGHLLNL (198 aa)) is GTP cyclohydrolase II. 250–254 (RVHSE) contributes to the GTP binding site. Residues Cys-255, Cys-266, and Cys-268 each contribute to the Zn(2+) site. Residues Gln-271, 293–295 (EGR), and Thr-315 each bind GTP. Asp-327 acts as the Proton acceptor; for GTP cyclohydrolase activity in catalysis. The active-site Nucleophile; for GTP cyclohydrolase activity is the Arg-329. GTP-binding residues include Thr-350 and Lys-355.

It in the N-terminal section; belongs to the DHBP synthase family. In the C-terminal section; belongs to the GTP cyclohydrolase II family. The cofactor is Mg(2+). Mn(2+) is required as a cofactor. It depends on Zn(2+) as a cofactor.

The catalysed reaction is D-ribulose 5-phosphate = (2S)-2-hydroxy-3-oxobutyl phosphate + formate + H(+). It catalyses the reaction GTP + 4 H2O = 2,5-diamino-6-hydroxy-4-(5-phosphoribosylamino)-pyrimidine + formate + 2 phosphate + 3 H(+). Its pathway is cofactor biosynthesis; riboflavin biosynthesis; 2-hydroxy-3-oxobutyl phosphate from D-ribulose 5-phosphate: step 1/1. The protein operates within cofactor biosynthesis; riboflavin biosynthesis; 5-amino-6-(D-ribitylamino)uracil from GTP: step 1/4. Functionally, catalyzes the conversion of D-ribulose 5-phosphate to formate and 3,4-dihydroxy-2-butanone 4-phosphate. In terms of biological role, catalyzes the conversion of GTP to 2,5-diamino-6-ribosylamino-4(3H)-pyrimidinone 5'-phosphate (DARP), formate and pyrophosphate. The protein is Riboflavin biosynthesis protein RibBA of Bacillus cereus (strain G9842).